The sequence spans 1960 residues: Exophilin-5 (1960 aa).

Positions 7 to 63 (GFDFSFLNEEEARKILQVLERNEELRRAEKDRISKLQKTKRDIRWLQGATGEWFEEI) constitute a RabBD domain. Composition is skewed to polar residues over residues 325–334 (ASPATGSFTA), 342–366 (DTQN…LSSI), and 635–645 (SQSSSFPDSTA). 5 disordered regions span residues 325–366 (ASPA…LSSI), 616–645 (TPAS…DSTA), 672–720 (HSTD…TGLP), 734–835 (DFQN…SSNT), and 910–976 (FSRS…KGRV). The span at 673–682 (STDSLSLTDT) shows a compositional bias: low complexity. The span at 692–707 (NSEKDMDVSVSKDEQL) shows a compositional bias: basic and acidic residues. Phosphoserine is present on residues S799 and S802. Composition is skewed to polar residues over residues 808–835 (ESGT…SSNT) and 910–920 (FSRSLSDQDPG). Basic and acidic residues predominate over residues 921–932 (QEQREEKDKATK). Positions 933–945 (SQDNQLAVNSTDN) are enriched in polar residues. Position 1027 is a phosphoserine (S1027). Residues 1035-1095 (QESKGTVASV…PKATKKMTDM (61 aa)) are disordered. Polar residues predominate over residues 1062 to 1074 (GKSTSDKPSSPES). S1083 and S1117 each carry phosphoserine. Disordered regions lie at residues 1291-1375 (AQVQ…LSRE), 1389-1493 (PLLH…DSES), and 1510-1759 (EAQP…EPHL). Positions 1318 to 1336 (PESKDVSQLPDRETSKSTL) are enriched in basic and acidic residues. A compositionally biased stretch (polar residues) spans 1356 to 1365 (KEISPSNVSK). Positions 1392–1403 (HQEKGAGKEHTK) are enriched in basic and acidic residues. Composition is skewed to polar residues over residues 1470 to 1493 (RETS…DSES) and 1520 to 1533 (SEAS…TNTA). S1493 is subject to Phosphoserine. Composition is skewed to basic and acidic residues over residues 1534–1546 (EMRK…HMLT) and 1561–1571 (TNTDETKDRYS). Residues 1572–1586 (GKHRLAAISKASKRI) show a composition bias toward basic residues. Positions 1637–1657 (ESSQMNVDKSETLLQETTVSS) are enriched in polar residues. Phosphoserine occurs at positions 1724, 1739, 1789, and 1819. A compositionally biased stretch (polar residues) spans 1732–1741 (TQKSTINSHC). 2 disordered regions span residues 1828 to 1847 (ESES…STSS) and 1906 to 1960 (VNSP…ESEL). A compositionally biased stretch (acidic residues) spans 1939-1950 (WDTDTTTDDEYY). The segment covering 1951-1960 (LDEKDKESEL) has biased composition (basic and acidic residues).

As to quaternary structure, interacts with RAB27A.

May act as Rab effector protein and play a role in vesicle trafficking. The polypeptide is Exophilin-5 (Mus musculus (Mouse)).